Reading from the N-terminus, the 349-residue chain is MGCESSLDPRVARLIDANLDRAREGLRVVEDWCRFGLERDDLVISLKDWRQRLGKLHQERYKRARSTVTDPGAGMEHPAQLDRHSPRQVVEANCGRVQEALRVLEEYGRNVDAPLSAEAAAIRYGLYDLEVTCLTATSGNNRRNRLQDCQLCLITSPCPDLVDRVKTALRSGVAMVQHRCKSGSDLERLAEARTLAALCRDHGALLIINDRIDLALAVDADGVHLGQDDLPTDVARGLIGPGRLLGRSTHSLNQVAEAHREDCDYLGLGPVNNTAVKPERPAIGAALVGEALAITHKPVFAIGGISQANLDALMAVGCRRVAVIGAIMGSDNPEKASQNLLSSLSRPTL.

Positions 1-125 are unknown; it reads MGCESSLDPR…SAEAAAIRYG (125 aa). A disordered region spans residues 63-85; that stretch reads RARSTVTDPGAGMEHPAQLDRHS. The tract at residues 126–349 is thiamine-phosphate synthase; sequence LYDLEVTCLT…LLSSLSRPTL (224 aa). Residues 177-181 and Asn209 each bind 4-amino-2-methyl-5-(diphosphooxymethyl)pyrimidine; that span reads QHRCK. Positions 210 and 229 each coordinate Mg(2+). Residues Ser248 and Lys277 each coordinate 4-amino-2-methyl-5-(diphosphooxymethyl)pyrimidine. Gly304 lines the 2-[(2R,5Z)-2-carboxy-4-methylthiazol-5(2H)-ylidene]ethyl phosphate pocket.

The protein belongs to the thiamine-phosphate synthase family. Mg(2+) is required as a cofactor.

It catalyses the reaction 2-[(2R,5Z)-2-carboxy-4-methylthiazol-5(2H)-ylidene]ethyl phosphate + 4-amino-2-methyl-5-(diphosphooxymethyl)pyrimidine + 2 H(+) = thiamine phosphate + CO2 + diphosphate. The enzyme catalyses 2-(2-carboxy-4-methylthiazol-5-yl)ethyl phosphate + 4-amino-2-methyl-5-(diphosphooxymethyl)pyrimidine + 2 H(+) = thiamine phosphate + CO2 + diphosphate. The catalysed reaction is 4-methyl-5-(2-phosphooxyethyl)-thiazole + 4-amino-2-methyl-5-(diphosphooxymethyl)pyrimidine + H(+) = thiamine phosphate + diphosphate. Its pathway is cofactor biosynthesis; thiamine diphosphate biosynthesis; thiamine phosphate from 4-amino-2-methyl-5-diphosphomethylpyrimidine and 4-methyl-5-(2-phosphoethyl)-thiazole: step 1/1. In terms of biological role, condenses 4-methyl-5-(beta-hydroxyethyl)thiazole monophosphate (THZ-P) and 2-methyl-4-amino-5-hydroxymethyl pyrimidine pyrophosphate (HMP-PP) to form thiamine monophosphate (TMP). In Parasynechococcus marenigrum (strain WH8102), this protein is Thiamine-phosphate synthase.